A 366-amino-acid polypeptide reads, in one-letter code: Chorismate synthase (366 aa).

Residues Arg48 and Arg54 each coordinate NADP(+). FMN-binding positions include 125-127 (RSS), 238-239 (NA), Gly278, 293-297 (KPTSS), and Arg319.

This sequence belongs to the chorismate synthase family. In terms of assembly, homotetramer. It depends on FMNH2 as a cofactor.

It carries out the reaction 5-O-(1-carboxyvinyl)-3-phosphoshikimate = chorismate + phosphate. It functions in the pathway metabolic intermediate biosynthesis; chorismate biosynthesis; chorismate from D-erythrose 4-phosphate and phosphoenolpyruvate: step 7/7. Its function is as follows. Catalyzes the anti-1,4-elimination of the C-3 phosphate and the C-6 proR hydrogen from 5-enolpyruvylshikimate-3-phosphate (EPSP) to yield chorismate, which is the branch point compound that serves as the starting substrate for the three terminal pathways of aromatic amino acid biosynthesis. This reaction introduces a second double bond into the aromatic ring system. This is Chorismate synthase from Chromobacterium violaceum (strain ATCC 12472 / DSM 30191 / JCM 1249 / CCUG 213 / NBRC 12614 / NCIMB 9131 / NCTC 9757 / MK).